Consider the following 73-residue polypeptide: Translation initiation factor IF-1 (73 aa).

An S1-like domain is found at 1–73 (MAKKDGVIEL…ARGRIVYRYK (73 aa)).

It belongs to the IF-1 family. Component of the 30S ribosomal translation pre-initiation complex which assembles on the 30S ribosome in the order IF-2 and IF-3, IF-1 and N-formylmethionyl-tRNA(fMet); mRNA recruitment can occur at any time during PIC assembly.

Its subcellular location is the cytoplasm. In terms of biological role, one of the essential components for the initiation of protein synthesis. Stabilizes the binding of IF-2 and IF-3 on the 30S subunit to which N-formylmethionyl-tRNA(fMet) subsequently binds. Helps modulate mRNA selection, yielding the 30S pre-initiation complex (PIC). Upon addition of the 50S ribosomal subunit IF-1, IF-2 and IF-3 are released leaving the mature 70S translation initiation complex. The chain is Translation initiation factor IF-1 from Tropheryma whipplei (strain TW08/27) (Whipple's bacillus).